The chain runs to 84 residues: RQC P-site tRNA stabilizing factor (84 aa).

One can recognise an S4 RNA-binding domain in the interval 1 to 64 (MRIDKFLQSV…IEEYTILQIP (64 aa)).

This sequence belongs to the RqcP family. In terms of assembly, associates with stalled 50S ribosomal subunits. Binds to RqcH, 23S rRNA and the P-site tRNA. Does not require RqcH for association with 50S subunits.

In terms of biological role, key component of the ribosome quality control system (RQC), a ribosome-associated complex that mediates the extraction of incompletely synthesized nascent chains from stalled ribosomes and their subsequent degradation. RqcH recruits Ala-charged tRNA, and with RqcP directs the elongation of stalled nascent chains on 50S ribosomal subunits, leading to non-templated C-terminal alanine extensions (Ala tail). The Ala tail promotes nascent chain degradation. RqcP is associated with the translocation-like movement of the peptidyl-tRNA from the A-site into the P-site. The chain is RQC P-site tRNA stabilizing factor from Helicobacter pylori (strain ATCC 700392 / 26695) (Campylobacter pylori).